An 881-amino-acid polypeptide reads, in one-letter code: Alanine--tRNA ligase (881 aa).

Zn(2+)-binding residues include H566, H570, C668, and H672.

Belongs to the class-II aminoacyl-tRNA synthetase family. Zn(2+) is required as a cofactor.

The protein localises to the cytoplasm. The enzyme catalyses tRNA(Ala) + L-alanine + ATP = L-alanyl-tRNA(Ala) + AMP + diphosphate. Catalyzes the attachment of alanine to tRNA(Ala) in a two-step reaction: alanine is first activated by ATP to form Ala-AMP and then transferred to the acceptor end of tRNA(Ala). Also edits incorrectly charged Ser-tRNA(Ala) and Gly-tRNA(Ala) via its editing domain. This Frankia casuarinae (strain DSM 45818 / CECT 9043 / HFP020203 / CcI3) protein is Alanine--tRNA ligase.